The sequence spans 460 residues: U-box domain-containing protein 9 (460 aa).

The U-box domain maps to S73–E147. ARM repeat units lie at residues T201 to I244, S248 to A287, and D289 to I328.

Binds to SD11, SD16, SD17, SD18, SD113, SD129 and SD25. Phosphorylated by SD1-6 and SD1-7.

It is found in the nucleus. The protein resides in the cell membrane. The enzyme catalyses S-ubiquitinyl-[E2 ubiquitin-conjugating enzyme]-L-cysteine + [acceptor protein]-L-lysine = [E2 ubiquitin-conjugating enzyme]-L-cysteine + N(6)-ubiquitinyl-[acceptor protein]-L-lysine.. Its pathway is protein modification; protein ubiquitination. In terms of biological role, functions as an E3 ubiquitin ligase. May be involved in the abscisic acid-mediated signaling pathway, at least during germination. This Arabidopsis thaliana (Mouse-ear cress) protein is U-box domain-containing protein 9 (PUB9).